The chain runs to 192 residues: Protein SHORT HYPOCOTYL IN WHITE LIGHT 1 (192 aa).

A Nuclear localization signal motif is present at residues Phe-43–Leu-50. A disordered region spans residues Gly-70–Glu-92. Over residues Val-77–Glu-92 the composition is skewed to acidic residues. The next 2 helical transmembrane spans lie at Ile-122–Leu-142 and Gly-159–Phe-179.

As to quaternary structure, interacts with HY5 and COP1 in the nucleus. As to expression, expressed in young seedlings (e.g. hypocotyl and cotyledons) and in green tissues (e.g. leaves, stems, sepals, and young siliques).

Its subcellular location is the nucleus membrane. Its function is as follows. Negative regulator of photomorphogenesis modulating both light and abscisic acid (ABA) signaling pathways. Negatively regulates the light-mediated inhibition of hypocotyl elongation, probably in a PHYB-mediated signaling pathway, but promotes flowering time (especially in long days) and lateral root formation. Enhances light-regulated gene expression. Promotes COP1-mediated degradation of HY5 during seedling development (e.g. hypocotyl growth) through enhanced ubiquitination in the darkness. Also involved in root gravitropism. The protein is Protein SHORT HYPOCOTYL IN WHITE LIGHT 1 of Arabidopsis thaliana (Mouse-ear cress).